The sequence spans 1533 residues: Glycogen debranching enzyme (1533 aa).

Position 64 is a phosphoserine (Ser-64). Catalysis depends on residues Asp-527, His-530, and Asp-628.

Belongs to the glycogen debranching enzyme family. In terms of assembly, monomer. Interacts with NHLRC1/malin. Post-translationally, ubiquitinated. In terms of tissue distribution, ubiquitous. Expressed in striated skeletal muscle, heart, liver, spleen, skin, spinal cord, lung, kidney and testicle.

Its subcellular location is the cytoplasm. It carries out the reaction Transfers a segment of a (1-&gt;4)-alpha-D-glucan to a new position in an acceptor, which may be glucose or a (1-&gt;4)-alpha-D-glucan.. The catalysed reaction is Hydrolysis of (1-&gt;6)-alpha-D-glucosidic branch linkages in glycogen phosphorylase limit dextrin.. Functionally, multifunctional enzyme acting as 1,4-alpha-D-glucan:1,4-alpha-D-glucan 4-alpha-D-glycosyltransferase and amylo-1,6-glucosidase in glycogen degradation. The polypeptide is Glycogen debranching enzyme (Equus caballus (Horse)).